Consider the following 356-residue polypeptide: NADH-quinone oxidoreductase subunit H (356 aa).

Helical transmembrane passes span 16–36 (IAVLQILAFAVVLLISLAFLL), 52–72 (PNVVGAFGLLQSFADFFKFVF), 85–105 (LYLLAPLITLILAFVTWAVVP), 117–137 (VGILYLFAMSSLGVYGIIIGG), 163–183 (IGFIIVTVLLFAGSMNLSEII), 201–221 (WPMPMFLVMIPMAVIFFISAL), 254–274 (FMVGEYLNIVLMCAMTAILFF), 295–315 (AWYFFWFAAKIVFFFFMFAMV), and 334–354 (IFLPISLAAVALVGAAVVYGP).

This sequence belongs to the complex I subunit 1 family. As to quaternary structure, NDH-1 is composed of 14 different subunits. Subunits NuoA, H, J, K, L, M, N constitute the membrane sector of the complex.

It is found in the cell inner membrane. It catalyses the reaction a quinone + NADH + 5 H(+)(in) = a quinol + NAD(+) + 4 H(+)(out). Its function is as follows. NDH-1 shuttles electrons from NADH, via FMN and iron-sulfur (Fe-S) centers, to quinones in the respiratory chain. The immediate electron acceptor for the enzyme in this species is believed to be ubiquinone. Couples the redox reaction to proton translocation (for every two electrons transferred, four hydrogen ions are translocated across the cytoplasmic membrane), and thus conserves the redox energy in a proton gradient. This subunit may bind ubiquinone. This is NADH-quinone oxidoreductase subunit H from Maricaulis maris (strain MCS10) (Caulobacter maris).